The sequence spans 202 residues: Probable ATP-dependent Clp protease proteolytic subunit 3 (202 aa).

The Nucleophile role is filled by serine 101. Histidine 126 is a catalytic residue.

It belongs to the peptidase S14 family. As to quaternary structure, fourteen ClpP subunits assemble into 2 heptameric rings which stack back to back to give a disk-like structure with a central cavity, resembling the structure of eukaryotic proteasomes.

The protein localises to the cytoplasm. The catalysed reaction is Hydrolysis of proteins to small peptides in the presence of ATP and magnesium. alpha-casein is the usual test substrate. In the absence of ATP, only oligopeptides shorter than five residues are hydrolyzed (such as succinyl-Leu-Tyr-|-NHMec, and Leu-Tyr-Leu-|-Tyr-Trp, in which cleavage of the -Tyr-|-Leu- and -Tyr-|-Trp bonds also occurs).. In terms of biological role, cleaves peptides in various proteins in a process that requires ATP hydrolysis. Has a chymotrypsin-like activity. Plays a major role in the degradation of misfolded proteins. The chain is Probable ATP-dependent Clp protease proteolytic subunit 3 from Synechocystis sp. (strain ATCC 27184 / PCC 6803 / Kazusa).